We begin with the raw amino-acid sequence, 173 residues long: NADH-ubiquinone oxidoreductase chain 6 (173 aa).

The next 5 helical transmembrane spans lie at 1-21, 27-47, 48-68, 87-107, and 139-159; these read MTYFVLFLGLCFVLGGLAVAS, YGVVGLVLASVAGCGWLLSLG, VSFVSLVLFMVYLGGMLVVFV, VVGYGVGFVVVLVVGLVVGGF, and CGVGMFLVAGWGLLLTLFVVL.

It belongs to the complex I subunit 6 family.

The protein resides in the mitochondrion membrane. The enzyme catalyses a ubiquinone + NADH + 5 H(+)(in) = a ubiquinol + NAD(+) + 4 H(+)(out). Functionally, core subunit of the mitochondrial membrane respiratory chain NADH dehydrogenase (Complex I) that is believed to belong to the minimal assembly required for catalysis. Complex I functions in the transfer of electrons from NADH to the respiratory chain. The immediate electron acceptor for the enzyme is believed to be ubiquinone. This chain is NADH-ubiquinone oxidoreductase chain 6 (MT-ND6), found in Aethia pygmaea (Whiskered auklet).